Here is a 335-residue protein sequence, read N- to C-terminus: Biotin synthase (335 aa).

Residues 43–269 (YFGKKVKLNM…INPTKEIRIA (227 aa)) form the Radical SAM core domain. Positions 61, 65, and 68 each coordinate [4Fe-4S] cluster. [2Fe-2S] cluster contacts are provided by Cys104, Cys137, Cys197, and Arg267.

Belongs to the radical SAM superfamily. Biotin synthase family. Homodimer. [4Fe-4S] cluster serves as cofactor. [2Fe-2S] cluster is required as a cofactor.

The enzyme catalyses (4R,5S)-dethiobiotin + (sulfur carrier)-SH + 2 reduced [2Fe-2S]-[ferredoxin] + 2 S-adenosyl-L-methionine = (sulfur carrier)-H + biotin + 2 5'-deoxyadenosine + 2 L-methionine + 2 oxidized [2Fe-2S]-[ferredoxin]. Its pathway is cofactor biosynthesis; biotin biosynthesis; biotin from 7,8-diaminononanoate: step 2/2. Catalyzes the conversion of dethiobiotin (DTB) to biotin by the insertion of a sulfur atom into dethiobiotin via a radical-based mechanism. The chain is Biotin synthase from Staphylococcus aureus (strain MSSA476).